The following is a 752-amino-acid chain: Photosystem I P700 chlorophyll a apoprotein A1 (752 aa).

Transmembrane regions (helical) follow at residues 73–96, 159–182, 198–222, 294–312, 349–372, 388–414, 436–458, and 533–551; these read IFSA…FHGA, LYVT…FHYH, LNHH…HVSL, IAHH…GHMY, WHAN…HHMY, LSLF…IFMI, ALIS…LYIH, and FMVH…LILL. Residues Cys575 and Cys584 each contribute to the [4Fe-4S] cluster site. Transmembrane regions (helical) follow at residues 591–612 and 666–688; these read HVFL…HFSW and ISAY…MFLF. A chlorophyll a'-binding site is contributed by His677. Met685 and Tyr693 together coordinate chlorophyll a. Trp694 provides a ligand contact to phylloquinone. A helical transmembrane segment spans residues 726–746; it reads AVGAAHYLLGGIATTWAFFLS.

It belongs to the PsaA/PsaB family. The PsaA/B heterodimer binds the P700 chlorophyll special pair and subsequent electron acceptors. PSI consists of a core antenna complex that captures photons, and an electron transfer chain that converts photonic excitation into a charge separation. The eukaryotic PSI reaction center is composed of at least 11 subunits. The cofactor is P700 is a chlorophyll a/chlorophyll a' dimer, A0 is one or more chlorophyll a, A1 is one or both phylloquinones and FX is a shared 4Fe-4S iron-sulfur center..

It is found in the plastid. The protein resides in the chloroplast thylakoid membrane. It catalyses the reaction reduced [plastocyanin] + hnu + oxidized [2Fe-2S]-[ferredoxin] = oxidized [plastocyanin] + reduced [2Fe-2S]-[ferredoxin]. Its function is as follows. PsaA and PsaB bind P700, the primary electron donor of photosystem I (PSI), as well as the electron acceptors A0, A1 and FX. PSI is a plastocyanin/cytochrome c6-ferredoxin oxidoreductase, converting photonic excitation into a charge separation, which transfers an electron from the donor P700 chlorophyll pair to the spectroscopically characterized acceptors A0, A1, FX, FA and FB in turn. Oxidized P700 is reduced on the lumenal side of the thylakoid membrane by plastocyanin or cytochrome c6. The protein is Photosystem I P700 chlorophyll a apoprotein A1 of Cyanidium caldarium (Red alga).